A 738-amino-acid chain; its full sequence is Probable trehalase (738 aa).

The segment at 1 to 44 (MLQGMPKRSGSISELHDPFSSPDVYYGPATDPRRQKQPNKYSRT) is disordered. Substrate-binding positions include R289, 296–297 (WD), N333, R342, 342–344 (RSQ), and G463. Catalysis depends on proton donor/acceptor residues D465 and E660.

The protein belongs to the glycosyl hydrolase 37 family.

It catalyses the reaction alpha,alpha-trehalose + H2O = alpha-D-glucose + beta-D-glucose. This is Probable trehalase (NTH2) from Eremothecium gossypii (strain ATCC 10895 / CBS 109.51 / FGSC 9923 / NRRL Y-1056) (Yeast).